The primary structure comprises 81 residues: Protein K6 (81 aa).

The protein belongs to the poxviridae K6 protein family.

This Homo sapiens (Human) protein is Protein K6.